Here is a 397-residue protein sequence, read N- to C-terminus: 1-deoxy-D-xylulose 5-phosphate reductoisomerase (397 aa).

NADPH is bound by residues T17, G18, S19, I20, A45, N47, and N130. 1-deoxy-D-xylulose 5-phosphate is bound at residue K131. E132 contacts NADPH. D156 contacts Mn(2+). 1-deoxy-D-xylulose 5-phosphate is bound by residues S157, E158, S182, and H205. E158 is a Mn(2+) binding site. An NADPH-binding site is contributed by G211. 1-deoxy-D-xylulose 5-phosphate-binding residues include S218, N223, K224, and E227. Mn(2+) is bound at residue E227.

It belongs to the DXR family. Mg(2+) is required as a cofactor. The cofactor is Mn(2+).

It carries out the reaction 2-C-methyl-D-erythritol 4-phosphate + NADP(+) = 1-deoxy-D-xylulose 5-phosphate + NADPH + H(+). Its pathway is isoprenoid biosynthesis; isopentenyl diphosphate biosynthesis via DXP pathway; isopentenyl diphosphate from 1-deoxy-D-xylulose 5-phosphate: step 1/6. Functionally, catalyzes the NADPH-dependent rearrangement and reduction of 1-deoxy-D-xylulose-5-phosphate (DXP) to 2-C-methyl-D-erythritol 4-phosphate (MEP). The protein is 1-deoxy-D-xylulose 5-phosphate reductoisomerase of Agrobacterium fabrum (strain C58 / ATCC 33970) (Agrobacterium tumefaciens (strain C58)).